The primary structure comprises 1128 residues: Adipocyte enhancer-binding protein 1 (1128 aa).

The N-terminal stretch at 1 to 25 (MAAVRTASLLCGLLALLALCPEGSP) is a signal peptide. The interval 40-368 (GFLSEFETQS…PRKGEELEEE (329 aa)) is disordered. Basic and acidic residues predominate over residues 77–109 (PRADAEAPPEKNKDKEKKGKKDKGPKAAKHLEG). Positions 113–163 (PTKKPKEKPPKATKKPKEKPPKATKKPKEKPPKATKKPKEKPPKATKRPSA) are enriched in basic residues. Polar residues-rich tracts occupy residues 178-187 (RSLTSPSNPG) and 198-209 (TSLNTWQGQGEE). Over residues 249–261 (RQKQPRPTPSRKR) the composition is skewed to basic residues. Basic and acidic residues-rich tracts occupy residues 267–282 (PEEKTQEPEERKEVDP) and 327–363 (EELKKPKKEGSSPKEDTEDKWAAEKNKDHKAGPRKGE). The F5/8 type C domain maps to 375-532 (IKCPPIGMES…LCMRLEVLGC (158 aa)). A required for DNA-binding and interaction with NFKBIA region spans residues 382–547 (MESHRIEDNQ…YSYYAQNEVV (166 aa)). Interaction with MAPK1 and MAPK3 stretches follow at residues 413–616 (AGAN…TAGM) and 998–1128 (DPSR…FGDF). Asn520 carries an N-linked (GlcNAc...) asparagine glycan. The interaction with PTEN stretch occupies residues 547-977 (VTTDSLDFRH…TQCNFILARS (431 aa)). The Peptidase M14 domain maps to 555-896 (RHHSYKDMRQ…EALLTFMEQV (342 aa)). Residues 933–1128 (DYWRILNPGE…ETYTVNFGDF (196 aa)) are required for transcriptional repression. The disordered stretch occupies residues 1027–1056 (LRRLNSTTGPATSPTPALTLPPSPTPGSTS). Over residues 1030–1044 (LNSTTGPATSPTPAL) the composition is skewed to low complexity.

Belongs to the peptidase M14 family. As to quaternary structure, interacts with different types of collagen, including collagens I, III, and V. Interacts with GNG5, NFKBIA, MAPK1, MAPK3 and PTEN. May interact with calmodulin. Interaction with MAPK1 may stimulate DNA-binding. Binds to DNA in vitro. Post-translationally, phosphorylated by MAPK1 in vitro. As to expression, expressed in aorta.

The protein resides in the secreted. Its function is as follows. As a positive regulator of collagen fibrillogenesis, it is probably involved in the organization and remodeling of the extracellular matrix. May positively regulate MAP-kinase activity in adipocytes, leading to enhanced adipocyte proliferation and reduced adipocyte differentiation. May also positively regulate NF-kappa-B activity in macrophages by promoting the phosphorylation and subsequent degradation of I-kappa-B-alpha (NFKBIA), leading to enhanced macrophage inflammatory responsiveness. Can act as a transcriptional repressor. In Rattus norvegicus (Rat), this protein is Adipocyte enhancer-binding protein 1 (Aebp1).